The chain runs to 777 residues: Disintegrin and metalloproteinase domain-containing protein 5 (777 aa).

The signal sequence occupies residues 1–16 (MFLVLVLLTGLGRLYA). A propeptide spanning residues 17–142 (GNNPRKTFVQ…VLSGFTHMIY (126 aa)) is cleaved from the precursor. Residues 17–706 (GNNPRKTFVQ…RGYVVLSTKR (690 aa)) are Extracellular-facing. N-linked (GlcNAc...) asparagine glycans are attached at residues asparagine 49 and asparagine 123. The 198-residue stretch at 185–382 (RYIDMYIVVN…YGLTCLRNTS (198 aa)) folds into the Peptidase M12B domain. 4 cysteine pairs are disulfide-bonded: cysteine 294–cysteine 377, cysteine 336–cysteine 361, cysteine 338–cysteine 343, and cysteine 456–cysteine 477. A Disintegrin domain is found at 396-485 (RRICGNSIRE…DCVHDTYAQN (90 aa)). Residue asparagine 566 is glycosylated (N-linked (GlcNAc...) asparagine). An EGF-like domain is found at 633–667 (NNGSCNAEIHCQGRGICNNLDNCHCHKGFVPPECA). Cystine bridges form between cysteine 637–cysteine 649, cysteine 643–cysteine 655, and cysteine 657–cysteine 666. A helical membrane pass occupies residues 707 to 727 (FQLIFYIGIPVIIIVAAILIK). Over 728-777 (QNQLGKLFCRGEKEHMSSVSEDGSRSVTLSATESKFPADTEHSNKEEDAQ) the chain is Cytoplasmic. Residues 744–760 (SSVSEDGSRSVTLSATE) show a composition bias toward polar residues. Residues 744-777 (SSVSEDGSRSVTLSATESKFPADTEHSNKEEDAQ) form a disordered region. Residues 763 to 777 (FPADTEHSNKEEDAQ) are compositionally biased toward basic and acidic residues.

As to quaternary structure, interacts with TEX101. Subject to proteolytic processing during epididymal transit of spermatozoa. Detected in testis.

It is found in the membrane. This is a non catalytic metalloprotease-like protein. May play a role in sperm-egg fusion. The polypeptide is Disintegrin and metalloproteinase domain-containing protein 5 (ADAM5) (Cavia porcellus (Guinea pig)).